Consider the following 243-residue polypeptide: tRNA (guanine-N(1)-)-methyltransferase (243 aa).

S-adenosyl-L-methionine is bound by residues Gly108 and 127-132 (LGDFVL).

It belongs to the RNA methyltransferase TrmD family. In terms of assembly, homodimer.

The protein resides in the cytoplasm. It carries out the reaction guanosine(37) in tRNA + S-adenosyl-L-methionine = N(1)-methylguanosine(37) in tRNA + S-adenosyl-L-homocysteine + H(+). Its function is as follows. Specifically methylates guanosine-37 in various tRNAs. In Streptococcus equi subsp. zooepidemicus (strain MGCS10565), this protein is tRNA (guanine-N(1)-)-methyltransferase.